We begin with the raw amino-acid sequence, 231 residues long: DNA mismatch repair protein MutH (231 aa).

This sequence belongs to the MutH family.

The protein localises to the cytoplasm. Functionally, sequence-specific endonuclease that cleaves unmethylated GATC sequences. It is involved in DNA mismatch repair. This chain is DNA mismatch repair protein MutH, found in Salmonella enteritidis PT4 (strain P125109).